Consider the following 363-residue polypeptide: Autophagy-related protein 3 (363 aa).

2 stretches are compositionally biased toward basic and acidic residues: residues 84-106 (DFAG…RGDG) and 129-138 (ARVRDVRTVD). The segment at 84–171 (DFAGDAGHDE…DDEAIIRDPK (88 aa)) is flexible region. Residues 84 to 174 (DFAGDAGHDE…AIIRDPKADN (91 aa)) form a disordered region. Residues 139–164 (ESGEMGEREDDEDDIPDMEDDDDDDE) show a composition bias toward acidic residues. The Glycyl thioester intermediate role is filled by C247. A handle region region spans residues 251-339 (SVMKTLLDRA…EEEVAIRVDQ (89 aa)).

This sequence belongs to the ATG3 family. In terms of assembly, monomer. Interacts with atg8 through an intermediate thioester bond through the C-terminal Gly of atg8. Interacts with the C-terminal region of the E1-like atg7 enzyme. Also interacts with the atg12-atg5 conjugate.

The protein localises to the cytoplasm. In terms of biological role, E2 conjugating enzyme required for the cytoplasm to vacuole transport (Cvt) and autophagy. Required for selective autophagic degradation of the nucleus (nucleophagy) as well as for mitophagy which contributes to regulate mitochondrial quantity and quality by eliminating the mitochondria to a basal level to fulfill cellular energy requirements and preventing excess ROS production. Responsible for the E2-like covalent binding of phosphatidylethanolamine to the C-terminal Gly of atg8. The atg12-atg5 conjugate plays a role of an E3 and promotes the transfer of atg8 from atg3 to phosphatidylethanolamine (PE). This step is required for the membrane association of atg8. The formation of the atg8-phosphatidylethanolamine conjugate is essential for autophagy and for the cytoplasm to vacuole transport (Cvt). The atg8-PE conjugate mediates tethering between adjacent membranes and stimulates membrane hemifusion, leading to expansion of the autophagosomal membrane during autophagy. Required for normal mycelial growth and conidiogenesis, and regulates sclerotial formation. Plays an essential role in pathogenesis. The sequence is that of Autophagy-related protein 3 from Botryotinia fuckeliana (strain BcDW1) (Noble rot fungus).